The chain runs to 424 residues: MGANVSQLEREIGSDLFPPNEHYFGLVNFGNTCYSNSVLQALYFCKPFREKVLEYKAKNKRPKETLLSCLADLFYSIATQKKKVGSIAPKKFITRLRKEKEEFDNYMQQDAHEFLNFLINHINEIILAERNAGPSNGNPKATNQGGSTSAMASSIASKSSSTSNSNSNSNSTTNSNGNSSNSTGSLNANTSVLDASGSLTATTTPIISGNGTGTNGANSEPTWVHEIFQGILTSETRCLNCETVSSKDENFFDLQVDVDQNTSITHCLRCFSNTETLCSDNKFKCDNCCSYQEAQKRMRVKKLPMILALHLKRFKYMEQFNRHIKVSHRVVFPLELRLFNTSDDAVNPDRLYDLTAVVIHCGSGPNRGHYISIVKSHGLWLLFDDDMVDKIEASTIEDFYGLTSDIHKSSETGYILFYQSRDCA.

The USP domain occupies 24 to 421 (FGLVNFGNTC…TGYILFYQSR (398 aa)). The active-site Nucleophile is the Cys33. The disordered stretch occupies residues 131-189 (NAGPSNGNPKATNQGGSTSAMASSIASKSSSTSNSNSNSNSTTNSNGNSSNSTGSLNAN). Over residues 133-144 (GPSNGNPKATNQ) the composition is skewed to polar residues. Low complexity predominate over residues 145–189 (GGSTSAMASSIASKSSSTSNSNSNSNSTTNSNGNSSNSTGSLNAN). His369 serves as the catalytic Proton acceptor.

Belongs to the peptidase C19 family. In terms of assembly, catalytic component of the Usp12-46 deubiquitylase complex consisting of Usp12-46, Wdr20 and Uaf1. The Usp12-46 deubiquitylase complex associates with arr/arrow; the interaction leads to deubiquitination and stabilization of arr/arrow.

It catalyses the reaction Thiol-dependent hydrolysis of ester, thioester, amide, peptide and isopeptide bonds formed by the C-terminal Gly of ubiquitin (a 76-residue protein attached to proteins as an intracellular targeting signal).. Catalytic component of the Usp12-46 deubiquitylase complex. Deubiquitylates the wg/wingless-signaling receptor arr/arrow, which stabilizes the receptor and increases its concentration at the cell surface; this enhances the sensitivity of cells to wg/wingless-signal stimulation. This increases the amplitude and spatial range of the signaling response to the wg/wingless morphogen gradient, facilitating the precise, concentration-dependent regulation of its target genes. Required for wg/wingless-mediated signaling in the wing imaginal disc and for wg/wingless-dependent regulation of adult intestinal stem cell proliferation. Negative regulator of Notch signaling, possibly by regulating lysosomal degradation of N/Notch and affecting cell surface receptor levels; this may be context and cell-type specific function involved in external sensory organ development but not in wing imaginal-disc dorsoventral boundary signaling. Protects against HTT/huntingtin-induced polyglutamine expansion-dependent neurodegeneration. The polypeptide is Ubiquitin carboxyl-terminal hydrolase 12/46 homolog (Drosophila melanogaster (Fruit fly)).